A 273-amino-acid chain; its full sequence is MEANAPKRKEARKSLRIKVISMGNAEVGKSCIIKRYCEKRFVPKYLATIGIDYGVTKVQVRDREIKVNIFDMAGHPFFYEVRNEFYKDTQGVILVYDVGQKESFDALDAWLAEMKQELGPHGNMDNIVFVVCANKIDCTKHRSVDESEGRLWAESRGFLYFETSAQTGEGINEMFQTFYSAIIDLCDNGGKRPPSSMGVGFTKEQADAIRRIRNSKDSWDMLGVKPGATRDEVNKAYRKLAVLLHPDKCVAPGSEDAFKAVVNARTALLKNIK.

GTP-binding positions include Gly23 to Ser30, Asp71 to His75, and Asn134 to Asp137. Residues Asp217–Lys273 form the J domain.

This sequence belongs to the small GTPase superfamily. Rab family.

The protein resides in the nucleus. Functionally, GTPase possibly involved in regulation of the MEK/ERK pathway. This Gallus gallus (Chicken) protein is DnaJ homolog subfamily C member 27 (DNAJC27).